The chain runs to 592 residues: uncharacterized protein (592 aa).

This is an uncharacterized protein from Saccharolobus solfataricus (strain ATCC 35092 / DSM 1617 / JCM 11322 / P2) (Sulfolobus solfataricus).